The sequence spans 227 residues: Neuromodulin (227 aa).

The segment at 1–227 (MLCCMRRTKQ…EDPEADQEHA (227 aa)) is disordered. 2 S-palmitoyl cysteine lipidation sites follow: Cys3 and Cys4. Positions 9 to 32 (KQVEKNDEDQKIEQDGVKPEDKAH) are enriched in basic and acidic residues. The 30-residue stretch at 31–60 (AHKAATKIQASFRGHITRKKLKGEKKGDAP) folds into the IQ domain. Ser41 is modified (phosphoserine; by PHK). Residues 54 to 84 (EKKGDAPAAEAEAKEKDDAPVADGVEKKEGD) show a composition bias toward basic and acidic residues. Residues 85 to 97 (GSATTDAAPATSP) are compositionally biased toward low complexity. 2 positions are modified to phosphoserine: Ser86 and Ser96. Residues 98-127 (KAEEPSKAGDAPSEEKKGEGDAAPSEEKAG) are compositionally biased toward basic and acidic residues. A compositionally biased stretch (low complexity) spans 128–139 (SAETESAAKATT). Thr138 carries the post-translational modification Phosphothreonine. Residues Ser142, Ser144, and Ser145 each carry the phosphoserine modification. The segment covering 146 to 158 (KAEDGPAKEEPKQ) has biased composition (basic and acidic residues). Positions 159–193 (ADVPAAVTDAAATTPAAEDAATKAAQPPTETAESS) are enriched in low complexity. Phosphothreonine is present on Thr172. 2 positions are modified to phosphoserine; by CK2: Ser192 and Ser193. A compositionally biased stretch (basic and acidic residues) spans 202 to 215 (VDEAKPKESARQDE). The span at 216–227 (GKEDPEADQEHA) shows a compositional bias: acidic residues.

This sequence belongs to the neuromodulin family. In terms of assembly, identified in a complex containing FGFR4, NCAM1, CDH2, PLCG1, FRS2, SRC, SHC1, GAP43 and CTTN. Interacts (via IQ domain) with calmodulin. Binds calmodulin with a greater affinity in the absence of Ca(2+) than in its presence. Post-translationally, phosphorylated. Phosphorylation of this protein by a protein kinase C is specifically correlated with certain forms of synaptic plasticity. In terms of processing, palmitoylated by ZDHHC3. Palmitoylation is regulated by ARF6 and is essential for plasma membrane association and axonal and dendritic filopodia induction. Deacylated by LYPLA2. In terms of tissue distribution, expressed in the hippocampus (at protein level). Expressed in the dorsal root ganglion and the spinal cord (at protein level).

Its subcellular location is the cell membrane. The protein resides in the cell projection. It localises to the growth cone membrane. It is found in the synapse. The protein localises to the filopodium membrane. Its subcellular location is the perikaryon. The protein resides in the dendrite. It localises to the axon. It is found in the cytoplasm. In terms of biological role, this protein is associated with nerve growth. It is a major component of the motile 'growth cones' that form the tips of elongating axons. Plays a role in axonal and dendritic filopodia induction. This chain is Neuromodulin (Gap43), found in Mus musculus (Mouse).